Here is a 631-residue protein sequence, read N- to C-terminus: tRNA uridine 5-carboxymethylaminomethyl modification enzyme MnmG (631 aa).

Position 13-18 (13-18) interacts with FAD; the sequence is GGGHAG. 273-287 lines the NAD(+) pocket; sequence GPRYCPSIEDKVNRF.

The protein belongs to the MnmG family. In terms of assembly, homodimer. Heterotetramer of two MnmE and two MnmG subunits. The cofactor is FAD.

Its subcellular location is the cytoplasm. NAD-binding protein involved in the addition of a carboxymethylaminomethyl (cmnm) group at the wobble position (U34) of certain tRNAs, forming tRNA-cmnm(5)s(2)U34. In Chromohalobacter salexigens (strain ATCC BAA-138 / DSM 3043 / CIP 106854 / NCIMB 13768 / 1H11), this protein is tRNA uridine 5-carboxymethylaminomethyl modification enzyme MnmG.